A 137-amino-acid polypeptide reads, in one-letter code: MSRARGFAFALGSVALVSGAQLGMRWSMTRLPAPDQWLPALSAGSVDLAALAVVAAAIAAYALSMLCWLLALRDLPLGRAYSLLSISYALVYLLAASLPLFNEPFTLSKTLGVALVILGVITINSRSAPATSPRNTP.

The Cytoplasmic portion of the chain corresponds to 1–5 (MSRAR). Residues 6–26 (GFAFALGSVALVSGAQLGMRW) form a helical membrane-spanning segment. Over 27-49 (SMTRLPAPDQWLPALSAGSVDLA) the chain is Periplasmic. The helical transmembrane segment at 50–70 (ALAVVAAAIAAYALSMLCWLL) threads the bilayer. Topologically, residues 71–80 (ALRDLPLGRA) are cytoplasmic. The helical transmembrane segment at 81 to 101 (YSLLSISYALVYLLAASLPLF) threads the bilayer. Position 102 (asparagine 102) is a topological domain, periplasmic. Residues 103–123 (EPFTLSKTLGVALVILGVITI) traverse the membrane as a helical segment. Topologically, residues 124–137 (NSRSAPATSPRNTP) are cytoplasmic.

The protein belongs to the ArnF family. In terms of assembly, heterodimer of ArnE and ArnF.

It localises to the cell inner membrane. It functions in the pathway bacterial outer membrane biogenesis; lipopolysaccharide biosynthesis. Its function is as follows. Translocates 4-amino-4-deoxy-L-arabinose-phosphoundecaprenol (alpha-L-Ara4N-phosphoundecaprenol) from the cytoplasmic to the periplasmic side of the inner membrane. This Pseudomonas fluorescens (strain ATCC BAA-477 / NRRL B-23932 / Pf-5) protein is Probable 4-amino-4-deoxy-L-arabinose-phosphoundecaprenol flippase subunit ArnF.